The sequence spans 450 residues: Ribulose bisphosphate carboxylase large chain (450 aa).

Residue K4 is modified to N6,N6,N6-trimethyllysine. Residues N113 and T163 each coordinate substrate. K165 (proton acceptor) is an active-site residue. K167 provides a ligand contact to substrate. 3 residues coordinate Mg(2+): K191, D193, and E194. K191 is subject to N6-carboxylysine. H284 acts as the Proton acceptor in catalysis. Positions 285, 317, and 369 each coordinate substrate.

This sequence belongs to the RuBisCO large chain family. Type I subfamily. Heterohexadecamer of 8 large chains and 8 small chains; disulfide-linked. The disulfide link is formed within the large subunit homodimers. Mg(2+) serves as cofactor. The disulfide bond which can form in the large chain dimeric partners within the hexadecamer appears to be associated with oxidative stress and protein turnover.

The protein localises to the plastid. It localises to the chloroplast. It carries out the reaction 2 (2R)-3-phosphoglycerate + 2 H(+) = D-ribulose 1,5-bisphosphate + CO2 + H2O. The catalysed reaction is D-ribulose 1,5-bisphosphate + O2 = 2-phosphoglycolate + (2R)-3-phosphoglycerate + 2 H(+). RuBisCO catalyzes two reactions: the carboxylation of D-ribulose 1,5-bisphosphate, the primary event in carbon dioxide fixation, as well as the oxidative fragmentation of the pentose substrate in the photorespiration process. Both reactions occur simultaneously and in competition at the same active site. The polypeptide is Ribulose bisphosphate carboxylase large chain (Crassula rupestris subsp. marnieriana (Pygmyweed)).